A 184-amino-acid chain; its full sequence is ATP synthase subunit b, chloroplastic (184 aa).

A helical transmembrane segment spans residues 27–49; it reads LATNPINLSVVLGVLIFFGKGVL.

The protein belongs to the ATPase B chain family. As to quaternary structure, F-type ATPases have 2 components, F(1) - the catalytic core - and F(0) - the membrane proton channel. F(1) has five subunits: alpha(3), beta(3), gamma(1), delta(1), epsilon(1). F(0) has four main subunits: a(1), b(1), b'(1) and c(10-14). The alpha and beta chains form an alternating ring which encloses part of the gamma chain. F(1) is attached to F(0) by a central stalk formed by the gamma and epsilon chains, while a peripheral stalk is formed by the delta, b and b' chains.

The protein localises to the plastid. It localises to the chloroplast thylakoid membrane. In terms of biological role, f(1)F(0) ATP synthase produces ATP from ADP in the presence of a proton or sodium gradient. F-type ATPases consist of two structural domains, F(1) containing the extramembraneous catalytic core and F(0) containing the membrane proton channel, linked together by a central stalk and a peripheral stalk. During catalysis, ATP synthesis in the catalytic domain of F(1) is coupled via a rotary mechanism of the central stalk subunits to proton translocation. Its function is as follows. Component of the F(0) channel, it forms part of the peripheral stalk, linking F(1) to F(0). The chain is ATP synthase subunit b, chloroplastic from Oenothera argillicola (Appalachian evening primrose).